The primary structure comprises 265 residues: U6 snRNA phosphodiesterase 1 (265 aa).

A disordered region spans residues 1–72 (MSAAPLVGYS…DSTKHGGRVR (72 aa)). The segment covering 20–31 (DGMRTRPGDGSH) has biased composition (basic and acidic residues). His120 functions as the Proton acceptor in the catalytic mechanism. AMP is bound at residue 120 to 122 (HLS). UMP-binding positions include Gln164, Tyr202, and 206–210 (SFHLS). AMP is bound by residues Tyr202 and 204–210 (DPSFHLS). His208 acts as the Proton donor in catalysis.

The protein belongs to the 2H phosphoesterase superfamily. USB1 family. As to quaternary structure, interacts with PLRG1, CDC5L and PRPF19.

It is found in the nucleus. It carries out the reaction a 3'-end uridylyl-uridine-RNA = a 3'-end 2',3'-cyclophospho-uridine-RNA + uridine. The catalysed reaction is a 3'-end uridylyl-adenosine-RNA = a 3'-end 2',3'-cyclophospho-uridine-RNA + adenosine. With respect to regulation, 3'-5' RNA exonuclease activity is inhibited by a 3' phosphate terminated RNA. Its function is as follows. 3'-5' RNA exonuclease that trims the 3' end of oligo(U) and oligo(A) tracts of the pre-U6 small nuclear RNA (snRNA) molecule, leading to the formation of a mature U6 snRNA 3' end-terminated with a 2',3'-cyclic phosphate. Participates in the U6 snRNA 3' end processing that prevents U6 snRNA degradation. In addition also removes uridines from the 3' end of U6atac snRNA and possibly the vault RNA VTRNA1-1. In Homo sapiens (Human), this protein is U6 snRNA phosphodiesterase 1.